A 202-amino-acid polypeptide reads, in one-letter code: Xanthine phosphoribosyltransferase (202 aa).

2 residues coordinate xanthine: Leu20 and Asn27. 128-132 is a 5-phospho-alpha-D-ribose 1-diphosphate binding site; the sequence is ASGGT. Position 156 (Lys156) interacts with xanthine.

Belongs to the purine/pyrimidine phosphoribosyltransferase family. Xpt subfamily. Homodimer.

The protein resides in the cytoplasm. It catalyses the reaction XMP + diphosphate = xanthine + 5-phospho-alpha-D-ribose 1-diphosphate. It functions in the pathway purine metabolism; XMP biosynthesis via salvage pathway; XMP from xanthine: step 1/1. Its function is as follows. Converts the preformed base xanthine, a product of nucleic acid breakdown, to xanthosine 5'-monophosphate (XMP), so it can be reused for RNA or DNA synthesis. This chain is Xanthine phosphoribosyltransferase, found in Deinococcus geothermalis (strain DSM 11300 / CIP 105573 / AG-3a).